The primary structure comprises 971 residues: Nuclear factor NF-kappa-B p110 subunit (971 aa).

The segment covering 23–41 (STSGYSSSTSPNSTNRSFS) has biased composition (low complexity). The tract at residues 23-46 (STSGYSSSTSPNSTNRSFSPAHSP) is disordered. Residues 147–339 (KHVPQLRIVE…NAINNRKSAQ (193 aa)) form the RHD domain. Phosphoserine; by PKA is present on Ser431. The Nuclear localization signal signature appears at 452 to 457 (SRKRRR). Positions 453 to 496 (RKRRRTGSSANSSSSGTESSNNSLDLPKTLGLAQPPNGLPNLSQ) are disordered. A compositionally biased stretch (low complexity) spans 460–475 (SSANSSSSGTESSNNS). Phosphothreonine is present on Thr620. Phosphotyrosine is present on Tyr626. 5 ANK repeats span residues 640 to 669 (DGDS…NPNL), 673 to 702 (AGNT…TVQL), 710 to 740 (DGLT…SISV), 745 to 775 (DGNN…NLTD), and 783 to 812 (AGHT…EKGE). Residues 826-877 (IDSSSDESSDAGQLEIKSEEMDIETKDEDSVELDLSSGPRRQKDESSRDTEM) are disordered. The span at 866-877 (RQKDESSRDTEM) shows a compositional bias: basic and acidic residues. Ser950 is subject to Phosphoserine.

Rel-p68 subunit interacts with Dredd. Interacts with DMAP1. Interacts with akirin; interaction is immune stimulation-dependent; activates selected rel target gene promoters. Post-translationally, phosphorylated by lipopolysaccharide (LPS)-activated I-kappa-B kinase complex before being cleaved. Rel-p110 subunit is cleaved within seconds of an immune challenge into Rel-p49 subunit and Rel-p68 subunit. Rel-p110 subunit reappears after 45 minutes.

It localises to the nucleus. The protein resides in the cytoplasm. Functionally, transcription factor that plays a key role in the humoral immune response as part of the peptidoglycan recognition protein (IMD) signaling pathway. Rel-p68 subunit translocates to the nucleus where it binds to the promoter of the Cecropin A1 gene and probably other antimicrobial peptide genes. I-kappa-B kinase complex (IKKbeta and key) and PGRP-LC are essential signaling components in transmitting the lipopolysaccharide (LPS) signal leading to cact degradation for NF-kappa-B (rel) activation. Part of a Toll-related receptor pathway that functions in the apoptosis of unfit cells during cell competition. Also part of some antiviral immunity: activated downstream of Sting signaling, which detects double-stranded RNA (dsRNA) from viruses, and promotes expression of antiviral effector genes. May be part of a NF-kappa-B and Tollo signaling cascade that regulates development of the peripheral nervous system. Possibly post-transcriptionally regulates the neuron-specific genes sc and ase, by promoting the rapid turnover of their transcripts in the wing imaginal disk. The sequence is that of Nuclear factor NF-kappa-B p110 subunit from Drosophila melanogaster (Fruit fly).